Here is a 592-residue protein sequence, read N- to C-terminus: Arginine--tRNA ligase (592 aa).

Positions 129–139 (ANPTGPLHVGH) match the 'HIGH' region motif.

It belongs to the class-I aminoacyl-tRNA synthetase family. Monomer.

Its subcellular location is the cytoplasm. It carries out the reaction tRNA(Arg) + L-arginine + ATP = L-arginyl-tRNA(Arg) + AMP + diphosphate. This chain is Arginine--tRNA ligase, found in Dichelobacter nodosus (strain VCS1703A).